Reading from the N-terminus, the 235-residue chain is Small ribosomal subunit protein uS3 (235 aa).

The KH type-2 domain maps to 39–107 (VRKFLNKELA…PAQINIAEVK (69 aa)). Residues 215–235 (AQSEQQPADKPKKAPRGKGRK) form a disordered region.

The protein belongs to the universal ribosomal protein uS3 family. Part of the 30S ribosomal subunit. Forms a tight complex with proteins S10 and S14.

In terms of biological role, binds the lower part of the 30S subunit head. Binds mRNA in the 70S ribosome, positioning it for translation. The protein is Small ribosomal subunit protein uS3 of Haemophilus influenzae (strain PittEE).